Consider the following 53-residue polypeptide: UPF0391 membrane protein YtjA (53 aa).

A run of 2 helical transmembrane segments spans residues 4 to 24 and 30 to 48; these read WGII…GGLA and AAKI…SLFM.

Belongs to the UPF0391 family.

Its subcellular location is the cell membrane. The chain is UPF0391 membrane protein YtjA from Escherichia coli O6:K15:H31 (strain 536 / UPEC).